Consider the following 132-residue polypeptide: Small ribosomal subunit protein eS17B (132 aa).

Residue Ser43 is modified to Phosphoserine.

Belongs to the eukaryotic ribosomal protein eS17 family. In terms of assembly, component of the small ribosomal subunit (SSU). Mature yeast ribosomes consist of a small (40S) and a large (60S) subunit. The 40S small subunit contains 1 molecule of ribosomal RNA (18S rRNA) and at least 33 different proteins. The large 60S subunit contains 3 rRNA molecules (25S, 5.8S and 5S rRNA) and at least 46 different proteins.

The protein resides in the cytoplasm. Its function is as follows. Component of the ribosome, a large ribonucleoprotein complex responsible for the synthesis of proteins in the cell. The small ribosomal subunit (SSU) binds messenger RNAs (mRNAs) and translates the encoded message by selecting cognate aminoacyl-transfer RNA (tRNA) molecules. The large subunit (LSU) contains the ribosomal catalytic site termed the peptidyl transferase center (PTC), which catalyzes the formation of peptide bonds, thereby polymerizing the amino acids delivered by tRNAs into a polypeptide chain. The nascent polypeptides leave the ribosome through a tunnel in the LSU and interact with protein factors that function in enzymatic processing, targeting, and the membrane insertion of nascent chains at the exit of the ribosomal tunnel. This chain is Small ribosomal subunit protein eS17B (rps1702), found in Schizosaccharomyces pombe (strain 972 / ATCC 24843) (Fission yeast).